We begin with the raw amino-acid sequence, 364 residues long: Peptide chain release factor 2 (364 aa).

Gln-251 is modified (N5-methylglutamine).

Belongs to the prokaryotic/mitochondrial release factor family. In terms of processing, methylated by PrmC. Methylation increases the termination efficiency of RF2.

Its subcellular location is the cytoplasm. Its function is as follows. Peptide chain release factor 2 directs the termination of translation in response to the peptide chain termination codons UGA and UAA. The protein is Peptide chain release factor 2 of Sulfurovum sp. (strain NBC37-1).